The following is a 550-amino-acid chain: Chaperonin GroEL (550 aa).

Residues 30–33, Lys51, 87–91, Gly415, and Asp496 each bind ATP; these read TLGP and DGTTT.

It belongs to the chaperonin (HSP60) family. In terms of assembly, forms a cylinder of 14 subunits composed of two heptameric rings stacked back-to-back. Interacts with the co-chaperonin GroES.

Its subcellular location is the cytoplasm. It catalyses the reaction ATP + H2O + a folded polypeptide = ADP + phosphate + an unfolded polypeptide.. Together with its co-chaperonin GroES, plays an essential role in assisting protein folding. The GroEL-GroES system forms a nano-cage that allows encapsulation of the non-native substrate proteins and provides a physical environment optimized to promote and accelerate protein folding. The protein is Chaperonin GroEL of Rickettsia prowazekii (strain Madrid E).